A 151-amino-acid chain; its full sequence is Ribosomal RNA large subunit methyltransferase H (151 aa).

Residues Leu73, Gly100, and Leu119–Leu124 each bind S-adenosyl-L-methionine.

It belongs to the RNA methyltransferase RlmH family. As to quaternary structure, homodimer.

It localises to the cytoplasm. It carries out the reaction pseudouridine(1915) in 23S rRNA + S-adenosyl-L-methionine = N(3)-methylpseudouridine(1915) in 23S rRNA + S-adenosyl-L-homocysteine + H(+). Specifically methylates the pseudouridine at position 1915 (m3Psi1915) in 23S rRNA. This Campylobacter lari (strain RM2100 / D67 / ATCC BAA-1060) protein is Ribosomal RNA large subunit methyltransferase H.